Here is a 60-residue protein sequence, read N- to C-terminus: Large ribosomal subunit protein uL30 (60 aa).

This sequence belongs to the universal ribosomal protein uL30 family. In terms of assembly, part of the 50S ribosomal subunit.

The sequence is that of Large ribosomal subunit protein uL30 from Streptococcus pneumoniae serotype 2 (strain D39 / NCTC 7466).